A 329-amino-acid polypeptide reads, in one-letter code: Flotillin-like protein FloA (329 aa).

The next 2 helical transmembrane spans lie at 5–25 (IFLL…LSFI) and 27–47 (LGLW…TLVG).

It belongs to the flotillin-like FloA family. In terms of assembly, homooligomerizes.

It localises to the cell membrane. It is found in the membrane raft. Functionally, found in functional membrane microdomains (FMM) that may be equivalent to eukaryotic membrane rafts. FMMs are highly dynamic and increase in number as cells age. Flotillins are thought to be important factors in membrane fluidity. This chain is Flotillin-like protein FloA, found in Thermoanaerobacter sp. (strain X514).